The sequence spans 73 residues: Serine rich endogenous peptide 1 (73 aa).

A signal peptide spans 1 to 28 (MGMSGSSGLVHVLMLLLLLSILFHHTES). The interval 48 to 73 (YKPNTAVETPPSRSRRGGGGQNTGAD) is disordered. The SCOOP motif signature appears at 53–67 (AVETPPSRSRRGGGG). Residues 59–61 (SRS) carry the SxS motif essential for MIK2 binding motif. Residues 64-73 (GGGGQNTGAD) show a composition bias toward gly residues.

Belongs to the serine rich endogenous peptide (SCOOP) phytocytokine family. Interacts with MIK2 (via extracellular leucine-rich repeat domain); this interaction triggers the formation of complex between MIK2 and the BAK1/SERK3 and SERK4 coreceptors, and subsequent BAK1 activation by phosphorylation. Mostly expressed in leaves and flowers, and, to a lower extent, in seedlings shoots.

The protein resides in the cell membrane. The protein localises to the secreted. Its subcellular location is the extracellular space. It is found in the apoplast. In terms of biological role, brassicaceae-specific phytocytokine (plant endogenous peptide released into the apoplast) perceived by MIK2 in a BAK1/SERK3 and SERK4 coreceptors-dependent manner, that modulates various physiological and antimicrobial processes including growth prevention and reactive oxygen species (ROS) response regulation. This Arabidopsis thaliana (Mouse-ear cress) protein is Serine rich endogenous peptide 1.